The sequence spans 114 residues: Notch-regulated ankyrin repeat-containing protein (114 aa).

2 ANK repeats span residues 50–79 (EGQT…DIRL) and 83–112 (DGWS…YSSS).

The protein belongs to the NRARP family. As to quaternary structure, forms a ternary complex with the intracellular domain (ICD) of notch1 and rbpj/suh.

Promotes loss of intracellular domain (ICD) of Notch1 in embryos. By down-regulating ICD levels, could function as a negative feedback regulator of Notch signaling that attenuates ICD-mediated transcription. Involved in angiogenesis. May be involved in somitogenesis. The sequence is that of Notch-regulated ankyrin repeat-containing protein (nrarp) from Xenopus tropicalis (Western clawed frog).